Here is a 99-residue protein sequence, read N- to C-terminus: uncharacterized protein (99 aa).

The chain crosses the membrane as a helical span at residues 76–96; the sequence is VLLGLASGMIGGIIGMFMWVL.

It localises to the host membrane. This is an uncharacterized protein from Haemophilus phage HP1 (strain HP1c1) (Bacteriophage HP1).